Consider the following 131-residue polypeptide: uncharacterized protein (131 aa).

Positions 60-100 (GRHTLSQVPNKGHEKASAVQLPEKQGTDQSRRGPTSAVTKA) are disordered. The segment covering 91–100 (RGPTSAVTKA) has biased composition (polar residues).

This is an uncharacterized protein from Homo sapiens (Human).